Consider the following 242-residue polypeptide: Myogenic factor 6 (242 aa).

Residues 31–63 form a disordered region; sequence SPLYPGSDGTLSPCQDQMPQEAGSDSSGEEHVL. Over residues 39–56 the composition is skewed to polar residues; that stretch reads GTLSPCQDQMPQEAGSDS. The 52-residue stretch at 93 to 144 folds into the bHLH domain; sequence DRRKAATLRERRRLKKINEAFEALKRRTVANPNQRLPKVEILRSAISYIERL.

In terms of assembly, efficient DNA binding requires dimerization with another bHLH protein. Interacts with CSRP3. In terms of tissue distribution, skeletal muscle.

It is found in the nucleus. In terms of biological role, involved in muscle differentiation (myogenic factor). Induces fibroblasts to differentiate into myoblasts. Probable sequence specific DNA-binding protein. This is Myogenic factor 6 (Myf6) from Mus musculus (Mouse).